The primary structure comprises 311 residues: Ribosomal RNA small subunit methyltransferase H (311 aa).

S-adenosyl-L-methionine is bound by residues 32-34, aspartate 52, phenylalanine 79, aspartate 100, and glutamine 107; that span reads AGH.

This sequence belongs to the methyltransferase superfamily. RsmH family.

The protein resides in the cytoplasm. The enzyme catalyses cytidine(1402) in 16S rRNA + S-adenosyl-L-methionine = N(4)-methylcytidine(1402) in 16S rRNA + S-adenosyl-L-homocysteine + H(+). Its function is as follows. Specifically methylates the N4 position of cytidine in position 1402 (C1402) of 16S rRNA. In Staphylococcus haemolyticus (strain JCSC1435), this protein is Ribosomal RNA small subunit methyltransferase H.